Consider the following 557-residue polypeptide: Formate--tetrahydrofolate ligase 1 (557 aa).

66–73 (TPAGEGKT) is a binding site for ATP.

The protein belongs to the formate--tetrahydrofolate ligase family.

The catalysed reaction is (6S)-5,6,7,8-tetrahydrofolate + formate + ATP = (6R)-10-formyltetrahydrofolate + ADP + phosphate. Its pathway is one-carbon metabolism; tetrahydrofolate interconversion. This chain is Formate--tetrahydrofolate ligase 1, found in Streptococcus sanguinis (strain SK36).